The sequence spans 351 residues: UDP-N-acetylglucosamine--N-acetylmuramyl-(pentapeptide) pyrophosphoryl-undecaprenol N-acetylglucosamine transferase (351 aa).

UDP-N-acetyl-alpha-D-glucosamine is bound by residues 13–15, Asn125, Arg161, Ser189, Ile241, 260–265, and Gln285; these read TGG and ALTVCE.

The protein belongs to the glycosyltransferase 28 family. MurG subfamily.

It localises to the cell inner membrane. It carries out the reaction di-trans,octa-cis-undecaprenyl diphospho-N-acetyl-alpha-D-muramoyl-L-alanyl-D-glutamyl-meso-2,6-diaminopimeloyl-D-alanyl-D-alanine + UDP-N-acetyl-alpha-D-glucosamine = di-trans,octa-cis-undecaprenyl diphospho-[N-acetyl-alpha-D-glucosaminyl-(1-&gt;4)]-N-acetyl-alpha-D-muramoyl-L-alanyl-D-glutamyl-meso-2,6-diaminopimeloyl-D-alanyl-D-alanine + UDP + H(+). It functions in the pathway cell wall biogenesis; peptidoglycan biosynthesis. Functionally, cell wall formation. Catalyzes the transfer of a GlcNAc subunit on undecaprenyl-pyrophosphoryl-MurNAc-pentapeptide (lipid intermediate I) to form undecaprenyl-pyrophosphoryl-MurNAc-(pentapeptide)GlcNAc (lipid intermediate II). The chain is UDP-N-acetylglucosamine--N-acetylmuramyl-(pentapeptide) pyrophosphoryl-undecaprenol N-acetylglucosamine transferase from Haemophilus influenzae (strain ATCC 51907 / DSM 11121 / KW20 / Rd).